Here is a 254-residue protein sequence, read N- to C-terminus: Proteasome subunit alpha (254 aa).

A disordered region spans residues 234-254 (EEMLPTPAATEDAPANGDAPS).

Belongs to the peptidase T1A family. As to quaternary structure, the 20S proteasome core is composed of 14 alpha and 14 beta subunits that assemble into four stacked heptameric rings, resulting in a barrel-shaped structure. The two inner rings, each composed of seven catalytic beta subunits, are sandwiched by two outer rings, each composed of seven alpha subunits. The catalytic chamber with the active sites is on the inside of the barrel. Has a gated structure, the ends of the cylinder being occluded by the N-termini of the alpha-subunits. Is capped by the proteasome-associated ATPase, ARC.

Its subcellular location is the cytoplasm. It participates in protein degradation; proteasomal Pup-dependent pathway. With respect to regulation, the formation of the proteasomal ATPase ARC-20S proteasome complex, likely via the docking of the C-termini of ARC into the intersubunit pockets in the alpha-rings, may trigger opening of the gate for substrate entry. Interconversion between the open-gate and close-gate conformations leads to a dynamic regulation of the 20S proteasome proteolysis activity. Its function is as follows. Component of the proteasome core, a large protease complex with broad specificity involved in protein degradation. The polypeptide is Proteasome subunit alpha (Rhodococcus erythropolis (strain PR4 / NBRC 100887)).